Here is a 575-residue protein sequence, read N- to C-terminus: Kelch repeat and BTB domain-containing protein 8 (575 aa).

One can recognise a BTB domain in the interval 23-91 (TDIVVEVDHG…AYTSRVILTE (69 aa)). The BACK domain occupies 126-228 (SIGVFIFADH…MEDAFIEKIP (103 aa)). 5 Kelch repeats span residues 310-364 (DIYI…YCCG), 365-415 (KMYA…EHKE), 417-455 (IYVLQGEFFLFYEPQKDYWGFLTPMTVPRIQGLAAVYKD), 457-506 (IYYI…LFQN), and 516-562 (QVTV…FECA).

The protein belongs to the KBTBD8 family. Component of the BCR(KBTBD8) E3 ubiquitin ligase complex, at least composed of CUL3, KBTBD8 and RBX1.

Its subcellular location is the cytoplasm. The protein localises to the cytoskeleton. The protein resides in the spindle. It is found in the golgi apparatus. Functionally, substrate-specific adapter of a BCR (BTB-CUL3-RBX1) E3 ubiquitin ligase complex that acts as a regulator of neural crest specification. The BCR(KBTBD8) complex acts by mediating monoubiquitination of NOLC1 and TCOF1: monoubiquitination promotes the formation of a NOLC1-TCOF1 complex that acts as a platform to connect RNA polymerase I with enzymes responsible for ribosomal processing and modification, leading to remodel the translational program of differentiating cells in favor of neural crest specification. The sequence is that of Kelch repeat and BTB domain-containing protein 8 from Rattus norvegicus (Rat).